We begin with the raw amino-acid sequence, 319 residues long: Protease HtpX homolog (319 aa).

The next 2 membrane-spanning stretches (helical) occupy residues 6–26 and 28–48; these read TAML…VIGG and GGMM…YWNS. Residue His130 coordinates Zn(2+). Glu131 is a catalytic residue. Residue His134 participates in Zn(2+) binding. Transmembrane regions (helical) follow at residues 145–165 and 172–192; these read LTAT…FFGG and PLGF…AMLV. Position 201 (Glu201) interacts with Zn(2+). A disordered region spans residues 279-319; the sequence is REMSAGSTAPARPDNAVRRSRSVPKTGWGRGGSEPPKGPWS.

The protein belongs to the peptidase M48B family. Requires Zn(2+) as cofactor.

Its subcellular location is the cell inner membrane. This chain is Protease HtpX homolog, found in Sinorhizobium fredii (strain NBRC 101917 / NGR234).